Reading from the N-terminus, the 246-residue chain is 3-deoxy-manno-octulosonate cytidylyltransferase (246 aa).

It belongs to the KdsB family.

The protein resides in the cytoplasm. The catalysed reaction is 3-deoxy-alpha-D-manno-oct-2-ulosonate + CTP = CMP-3-deoxy-beta-D-manno-octulosonate + diphosphate. Its pathway is nucleotide-sugar biosynthesis; CMP-3-deoxy-D-manno-octulosonate biosynthesis; CMP-3-deoxy-D-manno-octulosonate from 3-deoxy-D-manno-octulosonate and CTP: step 1/1. It participates in bacterial outer membrane biogenesis; lipopolysaccharide biosynthesis. Functionally, activates KDO (a required 8-carbon sugar) for incorporation into bacterial lipopolysaccharide in Gram-negative bacteria. The polypeptide is 3-deoxy-manno-octulosonate cytidylyltransferase (Rickettsia peacockii (strain Rustic)).